Consider the following 473-residue polypeptide: ATP synthase subunit beta (473 aa).

ATP is bound at residue 153–160 (GGAGVGKT).

It belongs to the ATPase alpha/beta chains family. As to quaternary structure, F-type ATPases have 2 components, CF(1) - the catalytic core - and CF(0) - the membrane proton channel. CF(1) has five subunits: alpha(3), beta(3), gamma(1), delta(1), epsilon(1). CF(0) has three main subunits: a(1), b(2) and c(9-12). The alpha and beta chains form an alternating ring which encloses part of the gamma chain. CF(1) is attached to CF(0) by a central stalk formed by the gamma and epsilon chains, while a peripheral stalk is formed by the delta and b chains.

It is found in the cell inner membrane. It catalyses the reaction ATP + H2O + 4 H(+)(in) = ADP + phosphate + 5 H(+)(out). Functionally, produces ATP from ADP in the presence of a proton gradient across the membrane. The catalytic sites are hosted primarily by the beta subunits. This is ATP synthase subunit beta from Rickettsia rickettsii (strain Iowa).